The primary structure comprises 61 residues: Protein translocase subunit SecE (61 aa).

A helical membrane pass occupies residues 38 to 58 (GIGMILIGTIGMIIRIIGYLV).

The protein belongs to the SecE/SEC61-gamma family. Component of the Sec protein translocase complex. Heterotrimer consisting of SecY (alpha), SecG (beta) and SecE (gamma) subunits. The heterotrimers can form oligomers, although 1 heterotrimer is thought to be able to translocate proteins. Interacts with the ribosome. May interact with SecDF, and other proteins may be involved.

It localises to the cell membrane. Essential subunit of the Sec protein translocation channel SecYEG. Clamps together the 2 halves of SecY. May contact the channel plug during translocation. This chain is Protein translocase subunit SecE, found in Thermococcus kodakarensis (strain ATCC BAA-918 / JCM 12380 / KOD1) (Pyrococcus kodakaraensis (strain KOD1)).